A 395-amino-acid polypeptide reads, in one-letter code: MASIEQALAEIKRGIDELIPEEELIAKLKENRPLRIKLGADPTAPDIHLGHTVILNKLRTFQELGHDVTFLIGDFTGMVGDPTGKNTTRPPLTREDVLANAETYKEQVFKILDPAKTKIEFNSTWLSELGAEGMIRLASNQTVARMLERDDFKKRYNGGRPIAIHEFMYPLLQGYDSVAMETDVELGGTDQKFNLLMGRELQKSHGQKPQVVLTMPLLVGLDGVKKMSKSAHNYIGVSEVPTEMFGKIMSISDDLMWNYFECLSFRPLEEIEQFKQDMANGKNPRDVKILLAKEIIARFHSEADADAAEQEFINRFQKGAMPEEMPELEFEAGIAISNLLKDAGLVNSTSDAMRMIRQGGAKIDGNKIEDTKLIPAAGTAVYQVGKRKFARITLK.

Residues 42-51 (PTAPDIHLGH) carry the 'HIGH' region motif. A 'KMSKS' region motif is present at residues 226 to 230 (KMSKS). Lysine 229 is an ATP binding site. In terms of domain architecture, S4 RNA-binding spans 334–394 (IAISNLLKDA…GKRKFARITL (61 aa)).

The protein belongs to the class-I aminoacyl-tRNA synthetase family. TyrS type 2 subfamily. In terms of assembly, homodimer.

It localises to the cytoplasm. The enzyme catalyses tRNA(Tyr) + L-tyrosine + ATP = L-tyrosyl-tRNA(Tyr) + AMP + diphosphate + H(+). In terms of biological role, catalyzes the attachment of tyrosine to tRNA(Tyr) in a two-step reaction: tyrosine is first activated by ATP to form Tyr-AMP and then transferred to the acceptor end of tRNA(Tyr). In Photobacterium profundum (strain SS9), this protein is Tyrosine--tRNA ligase.